Consider the following 346-residue polypeptide: uncharacterized protein (346 aa).

A disordered region spans residues 322-346; it reads GRDGGYRETTSPPTGRGRNVRGSHA.

This is an uncharacterized protein from Mycobacterium tuberculosis (strain CDC 1551 / Oshkosh).